A 423-amino-acid chain; its full sequence is Diaminobutyrate--2-oxoglutarate transaminase (423 aa).

At Lys267 the chain carries N6-(pyridoxal phosphate)lysine.

It belongs to the class-III pyridoxal-phosphate-dependent aminotransferase family. In terms of assembly, homohexamer. Pyridoxal 5'-phosphate serves as cofactor.

The catalysed reaction is L-2,4-diaminobutanoate + 2-oxoglutarate = L-aspartate 4-semialdehyde + L-glutamate. The protein operates within amine and polyamine biosynthesis; ectoine biosynthesis; L-ectoine from L-aspartate 4-semialdehyde: step 1/3. In terms of biological role, catalyzes reversively the conversion of L-aspartate beta-semialdehyde (ASA) to L-2,4-diaminobutyrate (DABA) by transamination with L-glutamate. The sequence is that of Diaminobutyrate--2-oxoglutarate transaminase (ectB) from Chromohalobacter salexigens (strain ATCC BAA-138 / DSM 3043 / CIP 106854 / NCIMB 13768 / 1H11).